The primary structure comprises 296 residues: Probable redox regulatory protein BQ2027_MB0506C (296 aa).

Belongs to the Rv0495c family.

Essential for maintaining intracellular redox homeostasis. This is Probable redox regulatory protein BQ2027_MB0506C from Mycobacterium bovis (strain ATCC BAA-935 / AF2122/97).